The sequence spans 465 residues: 3-isopropylmalate dehydratase large subunit (465 aa).

[4Fe-4S] cluster-binding residues include Cys347, Cys407, and Cys410. A disordered region spans residues 417–443; that stretch reads TLKPGERSASTSNRNFEGRQGKGGRTH.

Belongs to the aconitase/IPM isomerase family. LeuC type 1 subfamily. In terms of assembly, heterodimer of LeuC and LeuD. It depends on [4Fe-4S] cluster as a cofactor.

The enzyme catalyses (2R,3S)-3-isopropylmalate = (2S)-2-isopropylmalate. It functions in the pathway amino-acid biosynthesis; L-leucine biosynthesis; L-leucine from 3-methyl-2-oxobutanoate: step 2/4. Its function is as follows. Catalyzes the isomerization between 2-isopropylmalate and 3-isopropylmalate, via the formation of 2-isopropylmaleate. This chain is 3-isopropylmalate dehydratase large subunit, found in Thermobifida fusca (strain YX).